A 282-amino-acid polypeptide reads, in one-letter code: NADPH-dependent 7-cyano-7-deazaguanine reductase (282 aa).

88–90 contacts substrate; that stretch reads IES. 90–91 is a binding site for NADPH; it reads SK. Cysteine 189 acts as the Thioimide intermediate in catalysis. Aspartate 196 serves as the catalytic Proton donor. 228–229 is a binding site for substrate; that stretch reads HE. Residue 257-258 coordinates NADPH; the sequence is RG.

Belongs to the GTP cyclohydrolase I family. QueF type 2 subfamily. In terms of assembly, homodimer.

The protein localises to the cytoplasm. The enzyme catalyses 7-aminomethyl-7-carbaguanine + 2 NADP(+) = 7-cyano-7-deazaguanine + 2 NADPH + 3 H(+). Its pathway is tRNA modification; tRNA-queuosine biosynthesis. Its function is as follows. Catalyzes the NADPH-dependent reduction of 7-cyano-7-deazaguanine (preQ0) to 7-aminomethyl-7-deazaguanine (preQ1). The polypeptide is NADPH-dependent 7-cyano-7-deazaguanine reductase (Photorhabdus laumondii subsp. laumondii (strain DSM 15139 / CIP 105565 / TT01) (Photorhabdus luminescens subsp. laumondii)).